The primary structure comprises 74 residues: Sodium channel neurotoxin MeuNaTxalpha-11 (74 aa).

The signal sequence occupies residues 1–7; sequence LMTGVES. One can recognise an LCN-type CS-alpha/beta domain in the interval 9–73; that stretch reads RDAYIAKPHN…VPIRIPGKCH (65 aa). 4 cysteine pairs are disulfide-bonded: C19/C72, C23/C45, C31/C55, and C35/C57. Position 74 (R74) is a propeptide, removed by a carboxypeptidase.

This sequence belongs to the long (4 C-C) scorpion toxin superfamily. Sodium channel inhibitor family. Alpha subfamily. Expressed by the venom gland.

The protein localises to the secreted. Alpha toxins bind voltage-independently at site-3 of sodium channels (Nav) and inhibit the inactivation of the activated channels, thereby blocking neuronal transmission. The chain is Sodium channel neurotoxin MeuNaTxalpha-11 from Mesobuthus eupeus (Lesser Asian scorpion).